A 438-amino-acid chain; its full sequence is Methylenetetrahydrofolate--tRNA-(uracil-5-)-methyltransferase TrmFO (438 aa).

Residue 7-12 (GAGLAG) coordinates FAD.

It belongs to the MnmG family. TrmFO subfamily. The cofactor is FAD.

It is found in the cytoplasm. It carries out the reaction uridine(54) in tRNA + (6R)-5,10-methylene-5,6,7,8-tetrahydrofolate + NADH + H(+) = 5-methyluridine(54) in tRNA + (6S)-5,6,7,8-tetrahydrofolate + NAD(+). The enzyme catalyses uridine(54) in tRNA + (6R)-5,10-methylene-5,6,7,8-tetrahydrofolate + NADPH + H(+) = 5-methyluridine(54) in tRNA + (6S)-5,6,7,8-tetrahydrofolate + NADP(+). Functionally, catalyzes the folate-dependent formation of 5-methyl-uridine at position 54 (M-5-U54) in all tRNAs. The chain is Methylenetetrahydrofolate--tRNA-(uracil-5-)-methyltransferase TrmFO from Sulfurihydrogenibium sp. (strain YO3AOP1).